A 185-amino-acid polypeptide reads, in one-letter code: Ribosome-recycling factor (185 aa).

This sequence belongs to the RRF family.

It localises to the cytoplasm. Responsible for the release of ribosomes from messenger RNA at the termination of protein biosynthesis. May increase the efficiency of translation by recycling ribosomes from one round of translation to another. This is Ribosome-recycling factor from Pseudomonas fluorescens (strain Pf0-1).